We begin with the raw amino-acid sequence, 173 residues long: Crossover junction endodeoxyribonuclease RuvC (173 aa).

Active-site residues include Asp8, Glu67, and Asp139. Residues Asp8, Glu67, and Asp139 each contribute to the Mg(2+) site.

This sequence belongs to the RuvC family. Homodimer which binds Holliday junction (HJ) DNA. The HJ becomes 2-fold symmetrical on binding to RuvC with unstacked arms; it has a different conformation from HJ DNA in complex with RuvA. In the full resolvosome a probable DNA-RuvA(4)-RuvB(12)-RuvC(2) complex forms which resolves the HJ. Mg(2+) is required as a cofactor.

Its subcellular location is the cytoplasm. The catalysed reaction is Endonucleolytic cleavage at a junction such as a reciprocal single-stranded crossover between two homologous DNA duplexes (Holliday junction).. Functionally, the RuvA-RuvB-RuvC complex processes Holliday junction (HJ) DNA during genetic recombination and DNA repair. Endonuclease that resolves HJ intermediates. Cleaves cruciform DNA by making single-stranded nicks across the HJ at symmetrical positions within the homologous arms, yielding a 5'-phosphate and a 3'-hydroxyl group; requires a central core of homology in the junction. The consensus cleavage sequence is 5'-(A/T)TT(C/G)-3'. Cleavage occurs on the 3'-side of the TT dinucleotide at the point of strand exchange. HJ branch migration catalyzed by RuvA-RuvB allows RuvC to scan DNA until it finds its consensus sequence, where it cleaves and resolves the cruciform DNA. The polypeptide is Crossover junction endodeoxyribonuclease RuvC (Salmonella dublin (strain CT_02021853)).